Reading from the N-terminus, the 117-residue chain is Small ribosomal subunit protein bS6m (117 aa).

This sequence belongs to the bacterial ribosomal protein bS6 family. As to quaternary structure, component of the mitochondrial small ribosomal subunit (mt-SSU). Mature N.crassa 74S mitochondrial ribosomes consist of a small (37S) and a large (54S) subunit. The 37S small subunit contains a 16S ribosomal RNA (16S mt-rRNA) and 32 different proteins. The 54S large subunit contains a 23S rRNA (23S mt-rRNA) and 42 different proteins.

It is found in the mitochondrion. Functionally, component of the mitochondrial ribosome (mitoribosome), a dedicated translation machinery responsible for the synthesis of mitochondrial genome-encoded proteins, including at least some of the essential transmembrane subunits of the mitochondrial respiratory chain. The mitoribosomes are attached to the mitochondrial inner membrane and translation products are cotranslationally integrated into the membrane. The polypeptide is Small ribosomal subunit protein bS6m (mrp17) (Neurospora crassa (strain ATCC 24698 / 74-OR23-1A / CBS 708.71 / DSM 1257 / FGSC 987)).